The sequence spans 263 residues: 4-hydroxy-tetrahydrodipicolinate reductase (263 aa).

NAD(+) is bound by residues 8–13 (GACGRM), Asp-34, 99–101 (GTT), and 125–128 (SPNY). His-157 serves as the catalytic Proton donor/acceptor. His-158 is a binding site for (S)-2,3,4,5-tetrahydrodipicolinate. Lys-161 serves as the catalytic Proton donor. 167–168 (GT) lines the (S)-2,3,4,5-tetrahydrodipicolinate pocket.

Belongs to the DapB family.

It is found in the cytoplasm. The enzyme catalyses (S)-2,3,4,5-tetrahydrodipicolinate + NAD(+) + H2O = (2S,4S)-4-hydroxy-2,3,4,5-tetrahydrodipicolinate + NADH + H(+). It carries out the reaction (S)-2,3,4,5-tetrahydrodipicolinate + NADP(+) + H2O = (2S,4S)-4-hydroxy-2,3,4,5-tetrahydrodipicolinate + NADPH + H(+). It participates in amino-acid biosynthesis; L-lysine biosynthesis via DAP pathway; (S)-tetrahydrodipicolinate from L-aspartate: step 4/4. Its function is as follows. Catalyzes the conversion of 4-hydroxy-tetrahydrodipicolinate (HTPA) to tetrahydrodipicolinate. The sequence is that of 4-hydroxy-tetrahydrodipicolinate reductase from Methanosarcina acetivorans (strain ATCC 35395 / DSM 2834 / JCM 12185 / C2A).